The following is a 262-amino-acid chain: Serine/arginine-rich SC35-like splicing factor SCL30A (262 aa).

Disordered stretches follow at residues 1–38 (MRGR…LPTS) and 115–262 (ENRK…SPSQ). A phosphoserine mark is found at S9 and S20. In terms of domain architecture, RRM spans 37–115 (TSLLVRNLRH…RELTVVFAEE (79 aa)). Positions 115-140 (ENRKKPTEMRTRDRGGRSNRFQDRRR) are enriched in basic and acidic residues. A compositionally biased stretch (basic residues) spans 150–161 (PPRRGRRSRSRS). A phosphoserine mark is found at S166, S174, S176, and S178. Over residues 180 to 190 (QDRRYEKERSY) the composition is skewed to basic and acidic residues. Phosphoserine occurs at positions 191 and 193. Basic residues predominate over residues 209 to 226 (VKSHSRSPRRSVSPRKNR). The segment covering 234–246 (RSQSPVPRQSRSP) has biased composition (low complexity). A phosphoserine mark is found at S235, S259, and S261.

The protein belongs to the splicing factor SR family. SCL subfamily. Component of the spliceosome. Interacts with SNRNP35, CYP59 and RS2Z33.

The protein localises to the nucleus speckle. Involved in intron recognition and spliceosome assembly. Binds probably to multiple 5'-GAAG-3' repeats found in its third intron, suggesting autoregulation of alternative splicing. May be necessary for accurate splicing of the 3' region of introns. This is Serine/arginine-rich SC35-like splicing factor SCL30A (SCL30A) from Arabidopsis thaliana (Mouse-ear cress).